A 461-amino-acid polypeptide reads, in one-letter code: MLKIFNTLSRQKEEFKPIHAGKVGMYVCGVTIYDLCHIGHGRTFVAFDVVARYLRYLGYSLNYVRNVTDVDDKIIRRATENGESCDQLTTRMLAEMHADFDSLLIERPDIEPRATQHIAEIVEITQRLIDRGHAYVASNGDVMFSIDSDPQYGLLSRQDLDQLQAGARVEIDDVKRNPMDFVLWKMSKPGEPSWESPWGAGRPGWHIECSAMNCKQLGTHFDIHGGGSDLMFPHHENEIAQSSCAHDGPYVNYWMHSGMVMIDKEKMSKSLDNFFTIRDVLGYYDAETVRYFLMSGHYRSQLNYSEENLKQARTALERLYTALRGTDVNAQPAGGEVFEARFREAMDDDFNTPEAYSALFDLAREVNRLKAEDLTAANGLAAELRKLAKVLGLLQQEPELFLQGGAQADDGEVAEIEALIKQRNDARKAKDWALADAARDRLNEMNIVLEDGPQGTTWRRK.

Cys-28 is a Zn(2+) binding site. The short motif at 30 to 40 (VTIYDLCHIGH) is the 'HIGH' region element. Residues Cys-209, His-234, and Glu-238 each coordinate Zn(2+). A 'KMSKS' region motif is present at residues 266-270 (KMSKS). Residue Lys-269 participates in ATP binding.

The protein belongs to the class-I aminoacyl-tRNA synthetase family. As to quaternary structure, monomer. It depends on Zn(2+) as a cofactor.

The protein resides in the cytoplasm. It carries out the reaction tRNA(Cys) + L-cysteine + ATP = L-cysteinyl-tRNA(Cys) + AMP + diphosphate. The chain is Cysteine--tRNA ligase from Serratia proteamaculans (strain 568).